A 133-amino-acid chain; its full sequence is Small ribosomal subunit protein uS8c (133 aa).

Disordered stretches follow at residues 1-23 and 44-133; these read MGND…GAET and FSGN…HVWR. 2 stretches are compositionally biased toward polar residues: residues 12–23 and 55–66; these read APRNASSRGAET and TNRFPVSTSKYQ. Positions 67 to 81 are enriched in basic residues; the sequence is GRTRKARITTRRRVS. The segment covering 114–133 has biased composition (basic and acidic residues); sequence TDREARQKRIGGEAPRHVWR.

Belongs to the universal ribosomal protein uS8 family. Part of the 30S ribosomal subunit.

Its subcellular location is the plastid. The protein resides in the chloroplast. One of the primary rRNA binding proteins, it binds directly to 16S rRNA central domain where it helps coordinate assembly of the platform of the 30S subunit. In Selaginella uncinata (Blue spike-moss), this protein is Small ribosomal subunit protein uS8c (rps8).